The chain runs to 611 residues: Menin (611 aa).

Residues 214–390 (GVAERSWLYL…SLLETGEERT (177 aa)) form an interaction with FANCD2 region. The tract at residues 460 to 553 (REAEAAEAEE…SPPPEGPVLT (94 aa)) is disordered. A compositionally biased stretch (basic and acidic residues) spans 484–500 (RRESKPEEPPPPKKPAL). Phosphoserine occurs at positions 487 and 544. Phosphothreonine is present on T595.

Component of the MLL-HCF complex, at least composed of KMT2A/MLL1, MEN1, ASH2L, RBBP5, DPY30, WDR5, HCFC1 and HCFC2. Component of the menin-associated histone methyltransferase complex, at least composed of KMT2B/MLL4, MEN1, ASH2L, RBBP5, DPY30 and WDR5. Interacts with POLR2B. Interacts with POLR2A phosphorylated at 'Ser-5', but not with the unphosphorylated, nor 'Ser-2' phosphorylated POLR2A forms. Interacts with FANCD2 and DBF4. Interacts with SMAD3, but not with SMAD2, nor SMAD4. Directly interacts with NFKB1, NFKB2 and RELA. Interacts with JUND (via MBM motif); inhibits the interaction of JUND with MAPK10 and the phosphorylation of JUND by MAP kinases MAPK8 and MAPK10. Interacts with KMT2A (via MBM motif). The KMT2A-MEN1 complex interacts with PSIP1 with a greater affinity as MEN1 enhances interaction of KMT2A with PSIP1. As to expression, widely expressed, with high levels in hippocampus, cerebral cortex, testis and thymus (at protein level). Also expressed at high levels in pancreatic islets, ovary and bone marrow. In the brain, highest expression in hippocampus pyramidal nerve cells (at protein level). In the testis, may be expressed in spermatogonia (at protein level). Low expression, if any, in skeletal muscle.

The protein resides in the nucleus. In terms of biological role, essential component of a MLL/SET1 histone methyltransferase (HMT) complex, a complex that specifically methylates 'Lys-4' of histone H3 (H3K4). Functions as a transcriptional regulator. Binds to the TERT promoter and represses telomerase expression. Plays a role in TGFB1-mediated inhibition of cell-proliferation, possibly regulating SMAD3 transcriptional activity. Represses JUND-mediated transcriptional activation on AP1 sites, as well as that mediated by NFKB subunit RELA. Positively regulates HOXC8 and HOXC6 gene expression. May be involved in normal hematopoiesis through the activation of HOXA9 expression. May be involved in DNA repair. In Mus musculus (Mouse), this protein is Menin (Men1).